Reading from the N-terminus, the 201-residue chain is Iron-sulfur flavoprotein AF_1896 (201 aa).

The [4Fe-4S] cluster site is built by C46, C49, C52, and C57.

This sequence belongs to the SsuE family. Isf subfamily. In terms of assembly, homodimer. Requires FMN as cofactor. The cofactor is [4Fe-4S] cluster.

Its function is as follows. Redox-active protein probably involved in electron transport. This Archaeoglobus fulgidus (strain ATCC 49558 / DSM 4304 / JCM 9628 / NBRC 100126 / VC-16) protein is Iron-sulfur flavoprotein AF_1896.